A 568-amino-acid chain; its full sequence is Kelch-like protein 12 (568 aa).

A BTB domain is found at 33 to 100 (CDVTLRVEQK…VYTETVHVTV (68 aa)). Residues 135-236 (CLGIRDFAET…LTPRYITDVI (102 aa)) enclose the BACK domain. Kelch repeat units follow at residues 282–329 (VLLV…SLHD), 331–379 (IYVI…TLGD), 380–426 (MIYV…VASG), 427–473 (VIYC…LLND), 474–520 (HIYV…VLRG), and 522–567 (LYAI…ALRE).

As to quaternary structure, component of the BCR(KLHL12) E3 ubiquitin ligase complex, at least composed of CUL3 and KLHL12 and RBX1. This complex interacts with DVL3 upon activation of the Wnt signaling pathway by WNT3A. Interacts with DRD4, KLHL2 and SEC31A. Interacts with PEF1 and PDCD6/ALG-2; interaction takes place in response to cytosolic calcium increase and leads to bridge together the BCR(KLHL12) complex and SEC31 (SEC31A or SEC31B). In terms of processing, ubiquitinated by the SCF(FBXL17) complex, leading to its degradation by the proteasome: ubiquitination by the SCF(FBXL17) complex takes place when aberrant BTB domain dimers are formed.

The protein localises to the cytoplasmic vesicle. The protein resides in the COPII-coated vesicle. Its pathway is protein modification; protein ubiquitination. Functionally, substrate-specific adapter of a BCR (BTB-CUL3-RBX1) E3 ubiquitin ligase complex that acts as a negative regulator of Wnt signaling pathway and ER-Golgi transport. The BCR(KLHL12) complex is involved in ER-Golgi transport by regulating the size of COPII coats, thereby playing a key role in collagen export, which is required for embryonic stem (ES) cells division: BCR(KLHL12) acts by mediating monoubiquitination of SEC31 (SEC31A or SEC31B). The BCR(KLHL12) complex is also involved in neural crest specification: in response to cytosolic calcium increase, interacts with the heterodimer formed with PEF1 and PDCD6/ALG-2, leading to bridge together the BCR(KLHL12) complex and SEC31 (SEC31A or SEC31B), promoting monoubiquitination of SEC31 and subsequent collagen export. As part of the BCR(KLHL12) complex, also acts as a negative regulator of the Wnt signaling pathway by mediating ubiquitination and subsequent proteolysis of DVL3. The BCR(KLHL12) complex also mediates polyubiquitination of DRD4 and PEF1, without leading to degradation of these proteins. This chain is Kelch-like protein 12 (KLHL12), found in Bos taurus (Bovine).